Reading from the N-terminus, the 762-residue chain is MAVVAAAAATGSTTRSGGGGGEGTRSGRKKPPPPPLQERVPLGRRAAWAWRLAGLAVLLLLLALLALRLLRHHGGAGGDGGVWRVALVCEAWFAALCALNVSAKWSPVRFVTRPENLVAEGRTPSTTAAEYGELPAVDMLVTTADPALEPPLVTVNTVLSLLALDYPRAGERLACYVSDDGCSPLTCHALREAAGFAAAWVPFCRRYGVAVRAPFRYFSSSSSPESGGPADRKFLDDWTFMKDEYDKLVRRIKNTDERSLLRHGGGEFFAEFLNVERRNHPTIVKTRVSAVMTNAPIMLNMDCDMFVNNPQAVLHAMCLLLGFDDEASSGFVQAPQRFYDALKDDPFGNQMECFFKRFISGVQGVQGAFYAGTGCFHRRKAVYGVPPNFNGAEREDTIGSSSYKELHTRFGNSEELNESARNIIWDLSSKPMVDISSRIEVAKAVSACNYDIGTCWGQEVGWVYGSLTEDILTGQRIHAMGWRSVLMVTEPPAFMGSAPIGGPACLTQFKRWATGQSEIIISRNNPILATMFKRLKFRQCLAYLIVLGWPLRAPFELCYGLLGPYCILTNQSFLPKASEDGFSVPLALFISYNTYNFMEYMACGLSARAWWNNHRMQRIISVSAWTLAFLTVLLKSLGLSETVFEVTGKDKSMSDDDDNTDGADPGRFTFDSLPVFIPVTALAMLNIVAVTVGACRVAFGTAEGVPCAPGIGEFMCCGWLVLCFFPFVRGIVWGKGSYGIPWSVKLKASLLVAMFVTFCKRN.

Residues 1–15 (MAVVAAAAATGSTTR) show a composition bias toward low complexity. The disordered stretch occupies residues 1-39 (MAVVAAAAATGSTTRSGGGGGEGTRSGRKKPPPPPLQER). A run of 2 helical transmembrane segments spans residues 47 to 67 (AWAW…LLAL) and 81 to 101 (GVWR…ALNV). Active-site residues include Asp180 and Asp470. 6 helical membrane-spanning segments follow: residues 541 to 561 (LAYL…CYGL), 582 to 602 (FSVP…EYMA), 619 to 639 (IISV…SLGL), 673 to 693 (LPVF…VTVG), 708 to 728 (APGI…FPFV), and 739 to 759 (GIPW…VTFC).

It belongs to the glycosyltransferase 2 family. Plant cellulose synthase-like H subfamily.

It localises to the golgi apparatus membrane. In terms of biological role, thought to be a Golgi-localized beta-glycan synthase that polymerize the backbones of noncellulosic polysaccharides (hemicelluloses) of plant cell wall. The polypeptide is Cellulose synthase-like protein H2 (CSLH2) (Oryza sativa subsp. japonica (Rice)).